The primary structure comprises 162 residues: Xanthine phosphoribosyltransferase (162 aa).

Residues leucine 5 and threonine 12 each coordinate xanthine. Residue 113 to 117 (ANGQA) coordinates 5-phospho-alpha-D-ribose 1-diphosphate. Lysine 141 is a binding site for xanthine.

It belongs to the purine/pyrimidine phosphoribosyltransferase family. Xpt subfamily. In terms of assembly, homodimer.

It localises to the cytoplasm. It carries out the reaction XMP + diphosphate = xanthine + 5-phospho-alpha-D-ribose 1-diphosphate. The protein operates within purine metabolism; XMP biosynthesis via salvage pathway; XMP from xanthine: step 1/1. In terms of biological role, converts the preformed base xanthine, a product of nucleic acid breakdown, to xanthosine 5'-monophosphate (XMP), so it can be reused for RNA or DNA synthesis. This is Xanthine phosphoribosyltransferase (xpt) from Streptococcus mitis.